We begin with the raw amino-acid sequence, 854 residues long: Nucleolar MIF4G domain-containing protein 1 homolog (854 aa).

Disordered regions lie at residues 1–38, 55–105, 120–161, and 217–306; these read MAKI…FAGK, QSQL…DAEV, PLGK…KQRI, and RKWE…RDAE. A compositionally biased stretch (basic and acidic residues) spans 15–28; that stretch reads TRKEQRKQKSEFKK. A compositionally biased stretch (basic residues) spans 60 to 71; sequence KNKKKKRSKKPK. The segment covering 88 to 105 has biased composition (acidic residues); that stretch reads IDSDDDESIDSDFSDAEV. Basic and acidic residues-rich tracts occupy residues 135-156 and 217-238; these read RQDE…ESKS and RKWE…KEEA. Residues 242–289 are compositionally biased toward acidic residues; the sequence is SDEEEDKEDRDEPMDNFSEDDSGSEGEDDDEDLTGEEEQSEEDSEQEE. The span at 290 to 306 shows a compositional bias: basic and acidic residues; it reads NAPKIKEDIYGRKRDAE. Residues 352-553 enclose the MIF4G domain; it reads LKQCKGLLNR…DILNAVKNNN (202 aa). Residues 650–764 enclose the MI domain; it reads AERRNIFCII…QLSVLKVVDF (115 aa).

It belongs to the CWC22 family.

The protein localises to the nucleus. It localises to the nucleolus. The chain is Nucleolar MIF4G domain-containing protein 1 homolog from Drosophila melanogaster (Fruit fly).